A 333-amino-acid polypeptide reads, in one-letter code: Large ribosomal subunit protein uL3 (333 aa).

Belongs to the universal ribosomal protein uL3 family. As to quaternary structure, part of the 50S ribosomal subunit. Forms a cluster with proteins L14 and L24e.

Its function is as follows. One of the primary rRNA binding proteins, it binds directly near the 3'-end of the 23S rRNA, where it nucleates assembly of the 50S subunit. This is Large ribosomal subunit protein uL3 from Methanocorpusculum labreanum (strain ATCC 43576 / DSM 4855 / Z).